A 124-amino-acid polypeptide reads, in one-letter code: Large ribosomal subunit protein bL12 (124 aa).

It belongs to the bacterial ribosomal protein bL12 family. In terms of assembly, homodimer. Part of the ribosomal stalk of the 50S ribosomal subunit. Forms a multimeric L10(L12)X complex, where L10 forms an elongated spine to which 2 to 4 L12 dimers bind in a sequential fashion. Binds GTP-bound translation factors.

Forms part of the ribosomal stalk which helps the ribosome interact with GTP-bound translation factors. Is thus essential for accurate translation. This Chlorobium chlorochromatii (strain CaD3) protein is Large ribosomal subunit protein bL12.